Reading from the N-terminus, the 620-residue chain is Chaperone protein HscA homolog (620 aa).

Belongs to the heat shock protein 70 family.

Chaperone involved in the maturation of iron-sulfur cluster-containing proteins. Has a low intrinsic ATPase activity which is markedly stimulated by HscB. This Shewanella sp. (strain MR-7) protein is Chaperone protein HscA homolog.